Reading from the N-terminus, the 115-residue chain is Secapin (115 aa).

A signal peptide spans 1–24 (MRFQVYILHLCFFILVVLTYLSQG). Positions 25–90 (QSYTTTTTTS…STENFDITNR (66 aa)) are excised as a propeptide. Cysteine 99 and cysteine 110 are disulfide-bonded.

Belongs to the secapin family. Expressed in the epidermis, fat body and venom gland.

It localises to the secreted. Its function is as follows. Serine protease inhibitor which exhibits antifibrinolytic, antielastolytic and antimicrobial activities. Displays antimicrobial activity against bacteria and fungi. Likely functions in the innate immune response to microbial infection and possibly in the venom, as an antifibrinolytic agent. The recombinant form inhibits trypsin (IC(50)=80.02 nM, Ki=127.25 nM), chymotrypsin (IC(50)=393.78 nM, Ki=432.59 nM), the microbial serine proteases subtilisin A (IC(50)=379.20 nM, Ki=492.77 nM) and proteinase K (IC(50)=189.43 nM, Ki=271.76 nM), plasmin (IC(50)=457.98 nM, Ki=502.91 nM), human elastase (IC(50)=347.81 nM, Ki=469.90 nM) and porcine elastase (IC(50)=94.70 nM, Ki=125.62 nM). Does not inhibit thrombin. Binds to human plasmin and inhibits the plasmin-mediated degradation of fibrin to fibrin degradation products, indicating its role as an anti-fibrinolytic agent. Also binds to bacterial and fungal surfaces. Exhibits antimicrobial activity against the Gram-positive bacteria B.thuringiensis (MIC=4.21 uM) and P.larvae (MIC=11.13 uM), the Gram-negative bacteria E.coli (MIC=6.50 uM) and the multidrug-resistant A.baumannii (MIC=5 ug/ml, MBC=10 ug/ml), as well as against the fungus B.bassiana (IC(50)=2.57 uM). The synthetic peptide also exhibits antimicrobial activity against the Gram-positive bacterium P.larvae (MIC=41.12 uM), the Gram-negative bacterium P.aeruginosa (MIC=65.75 uM), and the fungus B.bassiana (IC(50)=44.27 uM). Is also able to prevent A.baumannii biofilm formation and eliminate established A.baumannii biofilms. In vitro, does not induce an inflammatory response and has no cytotoxic activity against mammalian cells. The chain is Secapin from Apis cerana (Indian honeybee).